The primary structure comprises 115 residues: Ustilagic acid biosynthesis cluster protein orf3 (115 aa).

An N-terminal signal peptide occupies residues 1 to 38 (MTYSKIACSLGKRGIARAPNQASSFFLLLFLFAKFSQQ). The interval 42–62 (SPCLASSGVAKSRGPASTDRP) is disordered.

The protein operates within secondary metabolite biosynthesis. In terms of biological role, part of the gene cluster that mediates the biosynthesis of the glycolipid biosurfactant ustilagic acid (UA). UA is a secreted cellobiose glycolipid that is toxic for many microorganisms and confers biocontrol activity to U.maydis. UA consists of 15,16-dihydroxypalmitic or 2,15,16-trihydroxypalmitic acid, which is O-glycosidically linked to cellobiose at its terminal hydroxyl group. In addition, the cellobiose moiety is acetylated and acylated with a short-chain hydroxy fatty acid. UA biosynthesis starts with omega-hydroxylation of palmitic acid catalyzed by the cytochrome P450 monooxygenase cyp1. Terminal hydroxylation of palmitic acid precedes subterminal hydroxylation catalyzed by the cytochrome P450 monooxygenase cyp2. Sequential glucosylation of the hydroxy fatty acid is probably catalyzed by the glycosyltransferase ugt1. The cellobiose lipid is further decorated by acetylation of the proximal glucose residue and by acylation with a short-chain beta-hydroxy fatty acid at the distal glucose residue. The acyltransferase uat1 may be a good candidate for catalyzing either acetylation or acylation of the cellobiose lipid. The fatty acid synthase fas2 may be involved in synthesis of the carbon backbone of the short-chain beta-hydroxy fatty acid esterified to the cellobiose disaccharide. The secreted UA consists of a mixture of both alpha-hydroxylated and non-hydroxylated glycolipids; therefore, alpha-hydroxylation of the long-chain fatty, catalyzed by the fatty acid hydroxylase ahd1, occurs late in UA biosynthesis and may be the last step before secretion. The protein is Ustilagic acid biosynthesis cluster protein orf3 of Mycosarcoma maydis (Corn smut fungus).